Consider the following 98-residue polypeptide: NADH-ubiquinone oxidoreductase chain 4L (98 aa).

3 consecutive transmembrane segments (helical) span residues 1–21 (MSMV…GMLV), 29–49 (SLLC…VTIL), and 61–81 (IILL…LVMV).

It belongs to the complex I subunit 4L family. Core subunit of respiratory chain NADH dehydrogenase (Complex I) which is composed of 45 different subunits.

It is found in the mitochondrion inner membrane. It catalyses the reaction a ubiquinone + NADH + 5 H(+)(in) = a ubiquinol + NAD(+) + 4 H(+)(out). Core subunit of the mitochondrial membrane respiratory chain NADH dehydrogenase (Complex I) which catalyzes electron transfer from NADH through the respiratory chain, using ubiquinone as an electron acceptor. Part of the enzyme membrane arm which is embedded in the lipid bilayer and involved in proton translocation. In Odobenus rosmarus rosmarus (Atlantic walrus), this protein is NADH-ubiquinone oxidoreductase chain 4L (MT-ND4L).